The chain runs to 650 residues: Acetyl-coenzyme A synthetase (650 aa).

Residues 191-194 (RAGR), Thr-311, and Asn-335 contribute to the CoA site. ATP-binding positions include 387-389 (GEP), 411-416 (DTWWQT), Asp-500, and Arg-515. Ser-523 lines the CoA pocket. Arg-526 provides a ligand contact to ATP. The Mg(2+) site is built by Val-537, His-539, and Val-542. Arg-584 is a binding site for CoA. The residue at position 609 (Lys-609) is an N6-acetyllysine.

It belongs to the ATP-dependent AMP-binding enzyme family. Mg(2+) is required as a cofactor. Post-translationally, acetylated. Deacetylation by the SIR2-homolog deacetylase activates the enzyme.

The enzyme catalyses acetate + ATP + CoA = acetyl-CoA + AMP + diphosphate. Catalyzes the conversion of acetate into acetyl-CoA (AcCoA), an essential intermediate at the junction of anabolic and catabolic pathways. AcsA undergoes a two-step reaction. In the first half reaction, AcsA combines acetate with ATP to form acetyl-adenylate (AcAMP) intermediate. In the second half reaction, it can then transfer the acetyl group from AcAMP to the sulfhydryl group of CoA, forming the product AcCoA. The polypeptide is Acetyl-coenzyme A synthetase (Shewanella halifaxensis (strain HAW-EB4)).